The primary structure comprises 153 residues: Small ribosomal subunit protein uS13 (153 aa).

Residues 129 to 153 are disordered; the sequence is RGQRTKSTFRHGSSVGVSRTRPTGN. Positions 143 to 153 are enriched in polar residues; that stretch reads VGVSRTRPTGN.

The protein belongs to the universal ribosomal protein uS13 family. In terms of assembly, part of the 30S ribosomal subunit. Forms a loose heterodimer with protein S19. Forms two bridges to the 50S subunit in the 70S ribosome.

Functionally, located at the top of the head of the 30S subunit, it contacts several helices of the 16S rRNA. In the 70S ribosome it contacts the 23S rRNA (bridge B1a) and protein L5 of the 50S subunit (bridge B1b), connecting the 2 subunits; these bridges are implicated in subunit movement. In Methanosphaera stadtmanae (strain ATCC 43021 / DSM 3091 / JCM 11832 / MCB-3), this protein is Small ribosomal subunit protein uS13.